Here is a 229-residue protein sequence, read N- to C-terminus: 2,3-bisphosphoglycerate-dependent phosphoglycerate mutase (229 aa).

Substrate contacts are provided by residues 7-14, 20-21, Arg59, 86-89, Lys97, 113-114, and 182-183; these read RHGQSEWN, TG, ERHY, RR, and GN. Residue His8 is the Tele-phosphohistidine intermediate of the active site. The Proton donor/acceptor role is filled by Glu86.

Belongs to the phosphoglycerate mutase family. BPG-dependent PGAM subfamily.

It catalyses the reaction (2R)-2-phosphoglycerate = (2R)-3-phosphoglycerate. Its pathway is carbohydrate degradation; glycolysis; pyruvate from D-glyceraldehyde 3-phosphate: step 3/5. Catalyzes the interconversion of 2-phosphoglycerate and 3-phosphoglycerate. In Listeria welshimeri serovar 6b (strain ATCC 35897 / DSM 20650 / CCUG 15529 / CIP 8149 / NCTC 11857 / SLCC 5334 / V8), this protein is 2,3-bisphosphoglycerate-dependent phosphoglycerate mutase.